Here is a 191-residue protein sequence, read N- to C-terminus: MVKLVFLGPPGAGKGTQASLIADFYKVPHISTGDILRSNVAERSPLGIKAKDYMDKGDLVPDQLILDMVKERLENPNAQNGWILDGFPRTVTQAEEFFKKYESEGEEAKSSSSFHVINLQVPDDVLVARLLSRKREDDQEETIRNRLQVYYQQTQPLIEFYQAREQLIIIDGNNPIETVTNAIKQEVDKIT.

11–16 (GAGKGT) serves as a coordination point for ATP. Residues 31–60 (STGDILRSNVAERSPLGIKAKDYMDKGDLV) form an NMP region. AMP is bound by residues Thr-32, Arg-37, 58–60 (DLV), 86–89 (GFPR), and Gln-93. Residues 132 to 138 (SRKREDD) are LID. Arg-133 serves as a coordination point for ATP. AMP contacts are provided by Arg-135 and Arg-146. ATP is bound at residue Asn-174.

It belongs to the adenylate kinase family. As to quaternary structure, monomer.

Its subcellular location is the cytoplasm. The enzyme catalyses AMP + ATP = 2 ADP. The protein operates within purine metabolism; AMP biosynthesis via salvage pathway; AMP from ADP: step 1/1. Catalyzes the reversible transfer of the terminal phosphate group between ATP and AMP. Plays an important role in cellular energy homeostasis and in adenine nucleotide metabolism. This Trichodesmium erythraeum (strain IMS101) protein is Adenylate kinase.